Here is a 403-residue protein sequence, read N- to C-terminus: MAACVKTNKSHVIFKKVSRDKSVTIYLGKRDYIDHVSQVEPVDGVVLVDPELVKGKKVYVTLTCAFRYGQEDIDVIGLTFRRDLYFSRVQVYPPVGAMSAPTQLQLSLLKKLGDNTYPFLLTFPDYLPCSVMLQPAPQDVGKSCGVDFEVKAFATDITDAEEDKIPKKSSVRLLIRKVQHAPPEMGPQPCAEASWQFFMSDKPLHLSVSLSKEIYFHGEPIPVTVTVTNNTEKVVKKIKVSVEQIANVVLYSSDYYVKPVASEETQEKVQPNSTLTKTLVLVPLLANNRERRGIALDGKIKHEDTNLASSTIIKEGIDRTVMGILVSYHIKVKLTVSGFLGELTSSEVATEVPFRLMHPQPEDPAKESVQDENLVFEEFARQNLKDTGENTEGKKDEDAGQDE.

Threonine 231 is subject to Phosphothreonine. The interval 381-403 (RQNLKDTGENTEGKKDEDAGQDE) is disordered.

Belongs to the arrestin family. As to quaternary structure, monomer. Homodimer. Homotetramer. Interacts with RHO (via the phosphorylated C-terminus). Retina and pineal gland.

The protein localises to the cell projection. The protein resides in the cilium. Its subcellular location is the photoreceptor outer segment. It localises to the membrane. In terms of biological role, binds to photoactivated, phosphorylated RHO and terminates RHO signaling via G-proteins by competing with G-proteins for the same binding site on RHO. May play a role in preventing light-dependent degeneration of retinal photoreceptor cells. The sequence is that of S-arrestin (Sag) from Rattus norvegicus (Rat).